Reading from the N-terminus, the 527-residue chain is Light-independent protochlorophyllide reductase subunit B (527 aa).

Asp36 is a binding site for [4Fe-4S] cluster. Catalysis depends on Asp292, which acts as the Proton donor. 428–429 lines the substrate pocket; that stretch reads GL.

The protein belongs to the ChlB/BchB/BchZ family. As to quaternary structure, protochlorophyllide reductase is composed of three subunits; BchL, BchN and BchB. Forms a heterotetramer of two BchB and two BchN subunits. The cofactor is [4Fe-4S] cluster.

It catalyses the reaction chlorophyllide a + oxidized 2[4Fe-4S]-[ferredoxin] + 2 ADP + 2 phosphate = protochlorophyllide a + reduced 2[4Fe-4S]-[ferredoxin] + 2 ATP + 2 H2O. It functions in the pathway porphyrin-containing compound metabolism; bacteriochlorophyll biosynthesis (light-independent). Functionally, component of the dark-operative protochlorophyllide reductase (DPOR) that uses Mg-ATP and reduced ferredoxin to reduce ring D of protochlorophyllide (Pchlide) to form chlorophyllide a (Chlide). This reaction is light-independent. The NB-protein (BchN-BchB) is the catalytic component of the complex. This is Light-independent protochlorophyllide reductase subunit B from Chlorobium phaeovibrioides (strain DSM 265 / 1930) (Prosthecochloris vibrioformis (strain DSM 265)).